Reading from the N-terminus, the 336-residue chain is Glyceraldehyde-3-phosphate dehydrogenase (336 aa).

NAD(+)-binding positions include 12 to 13, Asp-34, Arg-78, and Thr-121; that span reads RI. D-glyceraldehyde 3-phosphate is bound by residues 151–153, Thr-182, Arg-199, 212–213, and Arg-235; these read SCT and TG. The Nucleophile role is filled by Cys-152. Asn-316 lines the NAD(+) pocket.

The protein belongs to the glyceraldehyde-3-phosphate dehydrogenase family. In terms of assembly, homotetramer.

The protein localises to the cytoplasm. The catalysed reaction is D-glyceraldehyde 3-phosphate + phosphate + NAD(+) = (2R)-3-phospho-glyceroyl phosphate + NADH + H(+). It participates in carbohydrate degradation; glycolysis; pyruvate from D-glyceraldehyde 3-phosphate: step 1/5. In terms of biological role, catalyzes the oxidative phosphorylation of glyceraldehyde 3-phosphate (G3P) to 1,3-bisphosphoglycerate (BPG) using the cofactor NAD. The first reaction step involves the formation of a hemiacetal intermediate between G3P and a cysteine residue, and this hemiacetal intermediate is then oxidized to a thioester, with concomitant reduction of NAD to NADH. The reduced NADH is then exchanged with the second NAD, and the thioester is attacked by a nucleophilic inorganic phosphate to produce BPG. The polypeptide is Glyceraldehyde-3-phosphate dehydrogenase (gap) (Streptococcus pyogenes serotype M3 (strain ATCC BAA-595 / MGAS315)).